A 223-amino-acid chain; its full sequence is Deoxyribose-phosphate aldolase (223 aa).

Catalysis depends on aspartate 89, which acts as the Proton donor/acceptor. The active-site Schiff-base intermediate with acetaldehyde is lysine 152. Residue lysine 181 is the Proton donor/acceptor of the active site.

It belongs to the DeoC/FbaB aldolase family. DeoC type 1 subfamily.

The protein resides in the cytoplasm. It carries out the reaction 2-deoxy-D-ribose 5-phosphate = D-glyceraldehyde 3-phosphate + acetaldehyde. It participates in carbohydrate degradation; 2-deoxy-D-ribose 1-phosphate degradation; D-glyceraldehyde 3-phosphate and acetaldehyde from 2-deoxy-alpha-D-ribose 1-phosphate: step 2/2. Catalyzes a reversible aldol reaction between acetaldehyde and D-glyceraldehyde 3-phosphate to generate 2-deoxy-D-ribose 5-phosphate. The protein is Deoxyribose-phosphate aldolase of Listeria innocua serovar 6a (strain ATCC BAA-680 / CLIP 11262).